Here is a 311-residue protein sequence, read N- to C-terminus: Acetyl-coenzyme A carboxylase carboxyl transferase subunit alpha (311 aa).

One can recognise a CoA carboxyltransferase C-terminal domain in the interval 32 to 289 (ELNLLEERLR…KSVLEQKLAQ (258 aa)).

This sequence belongs to the AccA family. Acetyl-CoA carboxylase is a heterohexamer composed of biotin carboxyl carrier protein (AccB), biotin carboxylase (AccC) and two subunits each of ACCase subunit alpha (AccA) and ACCase subunit beta (AccD).

The protein localises to the cytoplasm. The enzyme catalyses N(6)-carboxybiotinyl-L-lysyl-[protein] + acetyl-CoA = N(6)-biotinyl-L-lysyl-[protein] + malonyl-CoA. The protein operates within lipid metabolism; malonyl-CoA biosynthesis; malonyl-CoA from acetyl-CoA: step 1/1. Component of the acetyl coenzyme A carboxylase (ACC) complex. First, biotin carboxylase catalyzes the carboxylation of biotin on its carrier protein (BCCP) and then the CO(2) group is transferred by the carboxyltransferase to acetyl-CoA to form malonyl-CoA. The polypeptide is Acetyl-coenzyme A carboxylase carboxyl transferase subunit alpha (Exiguobacterium sibiricum (strain DSM 17290 / CCUG 55495 / CIP 109462 / JCM 13490 / 255-15)).